A 238-amino-acid polypeptide reads, in one-letter code: Deoxyribose-phosphate aldolase (238 aa).

Aspartate 102 functions as the Proton donor/acceptor in the catalytic mechanism. Catalysis depends on lysine 164, which acts as the Schiff-base intermediate with acetaldehyde. Lysine 193 (proton donor/acceptor) is an active-site residue.

It belongs to the DeoC/FbaB aldolase family. DeoC type 1 subfamily.

Its subcellular location is the cytoplasm. It catalyses the reaction 2-deoxy-D-ribose 5-phosphate = D-glyceraldehyde 3-phosphate + acetaldehyde. It functions in the pathway carbohydrate degradation; 2-deoxy-D-ribose 1-phosphate degradation; D-glyceraldehyde 3-phosphate and acetaldehyde from 2-deoxy-alpha-D-ribose 1-phosphate: step 2/2. In terms of biological role, catalyzes a reversible aldol reaction between acetaldehyde and D-glyceraldehyde 3-phosphate to generate 2-deoxy-D-ribose 5-phosphate. This chain is Deoxyribose-phosphate aldolase, found in Rhodospirillum rubrum (strain ATCC 11170 / ATH 1.1.1 / DSM 467 / LMG 4362 / NCIMB 8255 / S1).